Here is a 730-residue protein sequence, read N- to C-terminus: Catalase-peroxidase (730 aa).

Positions 1–21 (MTENKCPVTGKMSKATAGSGT) are disordered. The tryptophyl-tyrosyl-methioninium (Trp-Tyr) (with M-244) cross-link spans 95–218 (WHSAGTYRVG…LAAVQMGLIY (124 aa)). H96 functions as the Proton acceptor in the catalytic mechanism. Residues 218-244 (YVNPEGPNGNPDPLGSAHDVRETFARM) constitute a cross-link (tryptophyl-tyrosyl-methioninium (Tyr-Met) (with W-95)). Residue H259 participates in heme b binding.

This sequence belongs to the peroxidase family. Peroxidase/catalase subfamily. In terms of assembly, homodimer or homotetramer. Heme b serves as cofactor. Post-translationally, formation of the three residue Trp-Tyr-Met cross-link is important for the catalase, but not the peroxidase activity of the enzyme.

It carries out the reaction H2O2 + AH2 = A + 2 H2O. It catalyses the reaction 2 H2O2 = O2 + 2 H2O. Functionally, bifunctional enzyme with both catalase and broad-spectrum peroxidase activity. The protein is Catalase-peroxidase of Clostridium botulinum (strain Alaska E43 / Type E3).